We begin with the raw amino-acid sequence, 667 residues long: mRNA cap guanine-N(7) methyltransferase (667 aa).

Positions 1-19 are enriched in basic and acidic residues; that stretch reads MYDPARDSWEERDGDEARS. Residues 1–272 form a disordered region; the sequence is MYDPARDSWE…RRRQEERERA (272 aa). The segment covering 33–52 has biased composition (polar residues); the sequence is FSSSEQIYGASGENNNTTDL. Residues 72-87 show a composition bias toward low complexity; sequence SPPAQSTTQTPPSIST. Residues 88 to 128 show a composition bias toward polar residues; it reads HVQSPVNPAAQEASNTQSLTSAAQNQSNKSTTTMDNTSGSA. Residues 132-142 are compositionally biased toward basic and acidic residues; it reads PRADPSDKSNR. Over residues 147 to 156 the composition is skewed to polar residues; the sequence is ASPTDQNGSQ. Basic and acidic residues predominate over residues 256–272; it reads LVDRETLRRRQEERERA. The 359-residue stretch at 309-667 folds into the mRNA cap 0 methyltransferase domain; that stretch reads SKIKGLRSFN…FYHAFCFYKV (359 aa). 318–319 is a binding site for mRNA; that stretch reads NN. Residues Lys322, Gly365, Asp389, Asp427, 470–472, and Tyr475 contribute to the S-adenosyl-L-methionine site; that span reads MFT. The segment covering 521–535 has biased composition (basic and acidic residues); sequence KKERQSQAKKEKTDE. The segment at 521 to 547 is disordered; it reads KKERQSQAKKEKTDEAPEDGEVEEDDG. A compositionally biased stretch (acidic residues) spans 536-547; the sequence is APEDGEVEEDDG.

Belongs to the class I-like SAM-binding methyltransferase superfamily. mRNA cap 0 methyltransferase family.

The protein resides in the nucleus. The enzyme catalyses a 5'-end (5'-triphosphoguanosine)-ribonucleoside in mRNA + S-adenosyl-L-methionine = a 5'-end (N(7)-methyl 5'-triphosphoguanosine)-ribonucleoside in mRNA + S-adenosyl-L-homocysteine. Its function is as follows. Responsible for methylating the 5'-cap structure of mRNAs. The sequence is that of mRNA cap guanine-N(7) methyltransferase (abd1) from Neosartorya fischeri (strain ATCC 1020 / DSM 3700 / CBS 544.65 / FGSC A1164 / JCM 1740 / NRRL 181 / WB 181) (Aspergillus fischerianus).